The sequence spans 100 residues: Integration host factor subunit alpha (100 aa).

This sequence belongs to the bacterial histone-like protein family. In terms of assembly, heterodimer of an alpha and a beta chain.

Functionally, this protein is one of the two subunits of integration host factor, a specific DNA-binding protein that functions in genetic recombination as well as in transcriptional and translational control. Involved in hydrogenase gene expression. This Rhodobacter capsulatus (Rhodopseudomonas capsulata) protein is Integration host factor subunit alpha (ihfA).